The following is a 316-amino-acid chain: Small ribosomal subunit biogenesis GTPase RsgA (316 aa).

One can recognise a CP-type G domain in the interval 83–248 (DQYKSKLFAA…LIDSPGFQEF (166 aa)). GTP is bound by residues 131–134 (NKTD) and 185–193 (GQSGMGKST). Cys272, Cys277, His279, and Cys285 together coordinate Zn(2+).

This sequence belongs to the TRAFAC class YlqF/YawG GTPase family. RsgA subfamily. In terms of assembly, monomer. Associates with 30S ribosomal subunit, binds 16S rRNA. Zn(2+) serves as cofactor.

Its subcellular location is the cytoplasm. In terms of biological role, one of several proteins that assist in the late maturation steps of the functional core of the 30S ribosomal subunit. Helps release RbfA from mature subunits. May play a role in the assembly of ribosomal proteins into the subunit. Circularly permuted GTPase that catalyzes slow GTP hydrolysis, GTPase activity is stimulated by the 30S ribosomal subunit. The chain is Small ribosomal subunit biogenesis GTPase RsgA from Paraburkholderia xenovorans (strain LB400).